We begin with the raw amino-acid sequence, 227 residues long: Leucyl/phenylalanyl-tRNA--protein transferase (227 aa).

The protein belongs to the L/F-transferase family.

It is found in the cytoplasm. The enzyme catalyses N-terminal L-lysyl-[protein] + L-leucyl-tRNA(Leu) = N-terminal L-leucyl-L-lysyl-[protein] + tRNA(Leu) + H(+). It catalyses the reaction N-terminal L-arginyl-[protein] + L-leucyl-tRNA(Leu) = N-terminal L-leucyl-L-arginyl-[protein] + tRNA(Leu) + H(+). The catalysed reaction is L-phenylalanyl-tRNA(Phe) + an N-terminal L-alpha-aminoacyl-[protein] = an N-terminal L-phenylalanyl-L-alpha-aminoacyl-[protein] + tRNA(Phe). Functionally, functions in the N-end rule pathway of protein degradation where it conjugates Leu, Phe and, less efficiently, Met from aminoacyl-tRNAs to the N-termini of proteins containing an N-terminal arginine or lysine. The sequence is that of Leucyl/phenylalanyl-tRNA--protein transferase from Afipia carboxidovorans (strain ATCC 49405 / DSM 1227 / KCTC 32145 / OM5) (Oligotropha carboxidovorans).